The chain runs to 275 residues: uncharacterized protein (275 aa).

Residues 1–162 (NLFSVIVSLI…ITSYWTEVQR (162 aa)) form the ABC transmembrane type-1 domain. Helical transmembrane passes span 21-41 (LYLV…GNIM), 106-126 (IMNL…YYLM), and 137-157 (FAYV…TSYW).

The protein resides in the cell membrane. This is an uncharacterized protein from Staphylococcus epidermidis.